The sequence spans 378 residues: Pulmonary surfactant-associated protein D (378 aa).

The signal sequence occupies residues 1 to 20 (MLLLPLSVLILLTQPPRSLG). Cys-35 and Cys-40 each carry S-nitrosocysteine. A disordered region spans residues 43-221 (MENGLPGRDG…ERGAKGESGL (179 aa)). Residues 46–222 (GLPGRDGRDG…RGAKGESGLP (177 aa)) form the Collagen-like domain. Residues 50 to 65 (RDGRDGREGPRGEKGD) show a composition bias toward basic and acidic residues. 4-hydroxyproline is present on Pro-78. At Lys-87 the chain carries 5-hydroxylysine. A glycan (N-linked (GlcNAc...) asparagine) is linked at Asn-90. Position 96 is a 4-hydroxyproline (Pro-96). 5-hydroxylysine is present on Lys-99. A compositionally biased stretch (pro residues) spans 105–114 (CGPPGPPGIP). Positions 137–146 (PKGETGPKGE) are enriched in low complexity. 4-hydroxyproline occurs at positions 171 and 177. A compositionally biased stretch (low complexity) spans 173-197 (ERGAPGSAGAAGPAGATGPQGPSGA). The segment covering 204-216 (KGDRGPPGERGAK) has biased composition (basic and acidic residues). Residues 223–254 (GITALRQQVETLQGQVQRLQKAFSQYKKVELF) are a coiled coil. The C-type lectin domain occupies 260–378 (VGEKIFKTGG…GELRLVICEF (119 aa)). Cystine bridges form between Cys-281–Cys-376 and Cys-354–Cys-368. The N-linked (GlcNAc...) asparagine glycan is linked to Asn-323.

Belongs to the SFTPD family. In terms of assembly, oligomeric complex of 4 set of homotrimers. Hydroxylation on proline residues within the sequence motif, GXPG, is most likely to be 4-hydroxy as this fits the requirement for 4-hydroxylation in vertebrates. In terms of processing, S-nitrosylation at Cys-35 and Cys-40 alters the quaternary structure which results in a pro-inflammatory chemoattractive signaling activity with macrophages.

It localises to the secreted. Its subcellular location is the extracellular space. The protein resides in the extracellular matrix. The protein localises to the surface film. In terms of biological role, contributes to the lung's defense against inhaled microorganisms, organic antigens and toxins. Interacts with compounds such as bacterial lipopolysaccharides, oligosaccharides and fatty acids and modulates leukocyte action in immune response. May participate in the extracellular reorganization or turnover of pulmonary surfactant. Binds strongly maltose residues and to a lesser extent other alpha-glucosyl moieties. The chain is Pulmonary surfactant-associated protein D (SFTPD) from Sus scrofa (Pig).